The sequence spans 343 residues: Probable dual-specificity RNA methyltransferase RlmN (343 aa).

Glutamate 91 (proton acceptor) is an active-site residue. A Radical SAM core domain is found at tyrosine 97 to aspartate 327. Cysteines 104 and 332 form a disulfide. [4Fe-4S] cluster-binding residues include cysteine 111, cysteine 115, and cysteine 118. S-adenosyl-L-methionine is bound by residues glycine 158–glutamate 159, serine 190, serine 213–histidine 215, and asparagine 289. Cysteine 332 acts as the S-methylcysteine intermediate in catalysis.

This sequence belongs to the radical SAM superfamily. RlmN family. Requires [4Fe-4S] cluster as cofactor.

The protein resides in the cytoplasm. The catalysed reaction is adenosine(2503) in 23S rRNA + 2 reduced [2Fe-2S]-[ferredoxin] + 2 S-adenosyl-L-methionine = 2-methyladenosine(2503) in 23S rRNA + 5'-deoxyadenosine + L-methionine + 2 oxidized [2Fe-2S]-[ferredoxin] + S-adenosyl-L-homocysteine. The enzyme catalyses adenosine(37) in tRNA + 2 reduced [2Fe-2S]-[ferredoxin] + 2 S-adenosyl-L-methionine = 2-methyladenosine(37) in tRNA + 5'-deoxyadenosine + L-methionine + 2 oxidized [2Fe-2S]-[ferredoxin] + S-adenosyl-L-homocysteine. In terms of biological role, specifically methylates position 2 of adenine 2503 in 23S rRNA and position 2 of adenine 37 in tRNAs. The polypeptide is Probable dual-specificity RNA methyltransferase RlmN (Clostridium novyi (strain NT)).